A 459-amino-acid polypeptide reads, in one-letter code: tRNA modification GTPase MnmE (459 aa).

(6S)-5-formyl-5,6,7,8-tetrahydrofolate contacts are provided by Arg-22, Glu-85, and Arg-124. One can recognise a TrmE-type G domain in the interval 221–380 (GLSTVIVGRP…LEIQIKDLFF (160 aa)). Position 231 (Asn-231) interacts with K(+). Residues 231–236 (NVGKSS), 250–256 (TEVAGTT), and 275–278 (DTAG) each bind GTP. Ser-235 is a Mg(2+) binding site. Thr-250, Val-252, and Thr-255 together coordinate K(+). A Mg(2+)-binding site is contributed by Thr-256. Lys-459 is a (6S)-5-formyl-5,6,7,8-tetrahydrofolate binding site.

This sequence belongs to the TRAFAC class TrmE-Era-EngA-EngB-Septin-like GTPase superfamily. TrmE GTPase family. In terms of assembly, homodimer. Heterotetramer of two MnmE and two MnmG subunits. The cofactor is K(+).

It is found in the cytoplasm. Its function is as follows. Exhibits a very high intrinsic GTPase hydrolysis rate. Involved in the addition of a carboxymethylaminomethyl (cmnm) group at the wobble position (U34) of certain tRNAs, forming tRNA-cmnm(5)s(2)U34. In Staphylococcus epidermidis (strain ATCC 35984 / DSM 28319 / BCRC 17069 / CCUG 31568 / BM 3577 / RP62A), this protein is tRNA modification GTPase MnmE.